A 542-amino-acid polypeptide reads, in one-letter code: NXPE family member 4 (542 aa).

Residues 1 to 26 (MKMMASRKSLWVLLFIVIFWISFTVF) form the signal peptide. 4 N-linked (GlcNAc...) asparagine glycosylation sites follow: N91, N92, N159, and N223.

This sequence belongs to the NXPE family.

It localises to the secreted. In Rattus norvegicus (Rat), this protein is NXPE family member 4 (Nxpe4).